A 207-amino-acid polypeptide reads, in one-letter code: MNPSRIRIKMCGMTRSEDIQYAIDLGVDAIGLIFYPKSVRNVSLEKARIIVNNIPPFVDIVAVLVNPEQSFVQLIINEIPVQLLQFHGEESSEFCRQFNKPFIKAIHPKTAIQIQSAVDEFFDASAILLDTPSDKERGGTGLTFDWNIIPENLSKPYILAGGLNESNILEAITMCHPYAVDVCSGIEASPGVKDHLKMSRFIKAIWG.

Belongs to the TrpF family.

It carries out the reaction N-(5-phospho-beta-D-ribosyl)anthranilate = 1-(2-carboxyphenylamino)-1-deoxy-D-ribulose 5-phosphate. It participates in amino-acid biosynthesis; L-tryptophan biosynthesis; L-tryptophan from chorismate: step 3/5. This Legionella pneumophila subsp. pneumophila (strain Philadelphia 1 / ATCC 33152 / DSM 7513) protein is N-(5'-phosphoribosyl)anthranilate isomerase.